We begin with the raw amino-acid sequence, 360 residues long: MTATLQQRKSANVWEQFCEWITSTNNRLYIGWFGVLMIPTLLAATTCFIIAFIAAPPVDIDGIREPVAGSLIYGNNIISGAVVPSSNAIGLHFYPIWEAASLDEWLYNGGPYQLVIFHFLTGVFCYLGREWELSYRLGMRPWICLAFSAPVAAATAVFLIYPIGQGSFSDGMPLGISGTFNFMIVFQAEHNILMHPFHMLGVAGVFGGSLFSAMHGSLVTSSLVRETTENESQNYGYKFGQEEETYNIVAAHGYFGRLIFQYASFNNSRQLHFFLAAWPVIGIWFTALGVSTMAFNLNGFNFNQSIIDSQGRVINTWADIINRANLGMEVMHERNAHNFPLDLAAGEVAPVALTAPAING.

3 helical membrane passes run 29–46, 118–133, and 142–156; these read YIGW…AATT, HFLT…EWEL, and WICL…AATA. A chlorophyll a-binding site is contributed by H118. Position 126 (Y126) interacts with pheophytin a. 2 residues coordinate [CaMn4O5] cluster: D170 and E189. The helical transmembrane segment at 197–218 threads the bilayer; it reads FHMLGVAGVFGGSLFSAMHGSL. H198 provides a ligand contact to chlorophyll a. A quinone contacts are provided by residues H215 and 264–265; that span reads SF. H215 is a binding site for Fe cation. Position 272 (H272) interacts with Fe cation. Residues 274-288 traverse the membrane as a helical segment; the sequence is FLAAWPVIGIWFTAL. H332, E333, D342, and A344 together coordinate [CaMn4O5] cluster. A propeptide spanning residues 345–360 is cleaved from the precursor; that stretch reads AGEVAPVALTAPAING.

It belongs to the reaction center PufL/M/PsbA/D family. As to quaternary structure, PSII is composed of 1 copy each of membrane proteins PsbA, PsbB, PsbC, PsbD, PsbE, PsbF, PsbH, PsbI, PsbJ, PsbK, PsbL, PsbM, PsbT, PsbX, PsbY, PsbZ, Psb30/Ycf12, peripheral proteins PsbO, CyanoQ (PsbQ), PsbU, PsbV and a large number of cofactors. It forms dimeric complexes. The D1/D2 heterodimer binds P680, chlorophylls that are the primary electron donor of PSII, and subsequent electron acceptors. It shares a non-heme iron and each subunit binds pheophytin, quinone, additional chlorophylls, carotenoids and lipids. D1 provides most of the ligands for the Mn4-Ca-O5 cluster of the oxygen-evolving complex (OEC). There is also a Cl(-1) ion associated with D1 and D2, which is required for oxygen evolution. The PSII complex binds additional chlorophylls, carotenoids and specific lipids. is required as a cofactor. Post-translationally, tyr-161 forms a radical intermediate that is referred to as redox-active TyrZ, YZ or Y-Z. In terms of processing, C-terminally processed by CtpA; processing is essential to allow assembly of the oxygen-evolving complex and thus photosynthetic growth.

The protein resides in the cellular thylakoid membrane. It catalyses the reaction 2 a plastoquinone + 4 hnu + 2 H2O = 2 a plastoquinol + O2. Its function is as follows. Photosystem II (PSII) is a light-driven water:plastoquinone oxidoreductase that uses light energy to abstract electrons from H(2)O, generating O(2) and a proton gradient subsequently used for ATP formation. It consists of a core antenna complex that captures photons, and an electron transfer chain that converts photonic excitation into a charge separation. The D1/D2 (PsbA/PsbD) reaction center heterodimer binds P680, the primary electron donor of PSII as well as several subsequent electron acceptors. This is Photosystem II protein D1 2 from Trichormus variabilis (strain ATCC 29413 / PCC 7937) (Anabaena variabilis).